A 367-amino-acid polypeptide reads, in one-letter code: Protein-glutamate methylesterase/protein-glutamine glutaminase 1 (367 aa).

One can recognise a Response regulatory domain in the interval 9-126 (KVLCVDDSAL…RDGMLDYSEK (118 aa)). Asp60 carries the post-translational modification 4-aspartylphosphate. A CheB-type methylesterase domain is found at 168–360 (LVSTEKLIIV…RRIMARLASM (193 aa)). Catalysis depends on residues Ser180, His206, and Asp302.

Belongs to the CheB family. Phosphorylated by CheA. Phosphorylation of the N-terminal regulatory domain activates the methylesterase activity.

The protein resides in the cytoplasm. It carries out the reaction [protein]-L-glutamate 5-O-methyl ester + H2O = L-glutamyl-[protein] + methanol + H(+). The catalysed reaction is L-glutaminyl-[protein] + H2O = L-glutamyl-[protein] + NH4(+). Its function is as follows. Involved in chemotaxis. Part of a chemotaxis signal transduction system that modulates chemotaxis in response to various stimuli. Catalyzes the demethylation of specific methylglutamate residues introduced into the chemoreceptors (methyl-accepting chemotaxis proteins or MCP) by CheR. Also mediates the irreversible deamidation of specific glutamine residues to glutamic acid. The sequence is that of Protein-glutamate methylesterase/protein-glutamine glutaminase 1 from Burkholderia pseudomallei (strain K96243).